We begin with the raw amino-acid sequence, 557 residues long: Potassium-transporting ATPase potassium-binding subunit (557 aa).

A run of 12 helical transmembrane segments spans residues Gly-5–Ser-25, Leu-63–Gly-83, Gly-132–Ile-152, Leu-170–Ile-190, Phe-253–Val-273, Leu-283–Val-303, Val-329–Ala-349, Ala-356–Val-376, Gly-379–Gly-399, Leu-416–Met-436, Leu-484–Ala-504, and Leu-526–Ala-546.

This sequence belongs to the KdpA family. In terms of assembly, the system is composed of three essential subunits: KdpA, KdpB and KdpC.

The protein localises to the cell inner membrane. Part of the high-affinity ATP-driven potassium transport (or Kdp) system, which catalyzes the hydrolysis of ATP coupled with the electrogenic transport of potassium into the cytoplasm. This subunit binds the periplasmic potassium ions and delivers the ions to the membrane domain of KdpB through an intramembrane tunnel. The chain is Potassium-transporting ATPase potassium-binding subunit from Escherichia coli (strain SE11).